A 147-amino-acid polypeptide reads, in one-letter code: Nucleoside diphosphate kinase (147 aa).

The ATP site is built by Lys-9, Phe-57, Arg-85, Thr-91, Arg-102, and Asn-112. Residue His-115 is the Pros-phosphohistidine intermediate of the active site.

It belongs to the NDK family. In terms of assembly, homotetramer. Mg(2+) serves as cofactor.

It localises to the cytoplasm. The enzyme catalyses a 2'-deoxyribonucleoside 5'-diphosphate + ATP = a 2'-deoxyribonucleoside 5'-triphosphate + ADP. It carries out the reaction a ribonucleoside 5'-diphosphate + ATP = a ribonucleoside 5'-triphosphate + ADP. Its function is as follows. Major role in the synthesis of nucleoside triphosphates other than ATP. The ATP gamma phosphate is transferred to the NDP beta phosphate via a ping-pong mechanism, using a phosphorylated active-site intermediate. In Listeria monocytogenes serotype 4a (strain HCC23), this protein is Nucleoside diphosphate kinase.